The following is a 376-amino-acid chain: Arabinogalactan endo-beta-1,4-galactanase (376 aa).

A signal peptide spans Met-1 to Ala-17. Glu-161 acts as the Proton donor in catalysis. The active-site Nucleophile is the Glu-270. 2 residues coordinate Ca(2+): Asp-281 and Asn-285.

This sequence belongs to the glycosyl hydrolase 53 family. Ca(2+) is required as a cofactor.

It carries out the reaction The enzyme specifically hydrolyzes (1-&gt;4)-beta-D-galactosidic linkages in type I arabinogalactans.. In Cellvibrio japonicus (strain Ueda107) (Pseudomonas fluorescens subsp. cellulosa), this protein is Arabinogalactan endo-beta-1,4-galactanase (ganB).